Reading from the N-terminus, the 213-residue chain is Glutathione S-transferase DHAR1, mitochondrial (213 aa).

The glutathione site is built by lysine 8 and aspartate 19. L-ascorbate-binding residues include lysine 8 and aspartate 19. Positions 10 to 83 (AVGAPDHLGD…DVIVGILEEK (74 aa)) constitute a GST N-terminal domain. Cysteine 20 (nucleophile) is an active-site residue. S-glutathionyl cysteine is present on cysteine 20. A Glutathione-binding motif is present at residues 20 to 25 (CPFSQR). Positions 47, 60, and 73 each coordinate glutathione. The region spanning 84–213 (YPDPPLKTPA…ISGWAPKVNP (130 aa)) is the GST C-terminal domain. The Copper-binding signature appears at 133–137 (HLKSH). The glutathione site is built by histidine 160 and tryptophan 207. Lysine 210 serves as a coordination point for L-ascorbate.

This sequence belongs to the GST superfamily. DHAR family. As to quaternary structure, monomer. Interacts with copper (Cu). Spontaneous S-glutathionylation in the presence of oxidized glutathione (GSSG). Expressed at least in roots and leaves.

It localises to the mitochondrion. It is found in the cytoplasm. Its subcellular location is the cytosol. The protein resides in the peroxisome. The protein localises to the membrane. It catalyses the reaction RX + glutathione = an S-substituted glutathione + a halide anion + H(+). It carries out the reaction L-dehydroascorbate + 2 glutathione = glutathione disulfide + L-ascorbate. Displays a dual function. As a soluble protein, exhibits glutathione-dependent thiol transferase and dehydroascorbate (DHA) reductase activities. Key component of the ascorbate recycling system. Involved in the redox homeostasis, especially in scavenging of ROS under oxidative stresses, subsequently to biotic or abiotic inducers. As a peripheral membrane protein, could also function as voltage-gated ion channel. This is Glutathione S-transferase DHAR1, mitochondrial from Arabidopsis thaliana (Mouse-ear cress).